Consider the following 348-residue polypeptide: Probable dual-specificity RNA methyltransferase RlmN (348 aa).

Glutamate 89 serves as the catalytic Proton acceptor. In terms of domain architecture, Radical SAM core spans 95 to 328 (HKNRNTVCVS…VTLRISYGSR (234 aa)). Residues cysteine 102 and cysteine 333 are joined by a disulfide bond. Residues cysteine 109, cysteine 113, and cysteine 116 each coordinate [4Fe-4S] cluster. Residues 159 to 160 (GE), serine 191, 214 to 216 (SLH), and asparagine 290 each bind S-adenosyl-L-methionine. Catalysis depends on cysteine 333, which acts as the S-methylcysteine intermediate.

This sequence belongs to the radical SAM superfamily. RlmN family. [4Fe-4S] cluster serves as cofactor.

It localises to the cytoplasm. It catalyses the reaction adenosine(2503) in 23S rRNA + 2 reduced [2Fe-2S]-[ferredoxin] + 2 S-adenosyl-L-methionine = 2-methyladenosine(2503) in 23S rRNA + 5'-deoxyadenosine + L-methionine + 2 oxidized [2Fe-2S]-[ferredoxin] + S-adenosyl-L-homocysteine. It carries out the reaction adenosine(37) in tRNA + 2 reduced [2Fe-2S]-[ferredoxin] + 2 S-adenosyl-L-methionine = 2-methyladenosine(37) in tRNA + 5'-deoxyadenosine + L-methionine + 2 oxidized [2Fe-2S]-[ferredoxin] + S-adenosyl-L-homocysteine. Functionally, specifically methylates position 2 of adenine 2503 in 23S rRNA and position 2 of adenine 37 in tRNAs. The chain is Probable dual-specificity RNA methyltransferase RlmN from Dictyoglomus thermophilum (strain ATCC 35947 / DSM 3960 / H-6-12).